The following is a 127-amino-acid chain: Ribonuclease VapC9 (127 aa).

The PINc domain occupies 2 to 115; it reads IVVDASAALA…VTADLRLSDT (114 aa). Mg(2+) contacts are provided by Asp-5 and Asp-91.

This sequence belongs to the PINc/VapC protein family. Requires Mg(2+) as cofactor.

In terms of biological role, toxic component of a type II toxin-antitoxin (TA) system. An RNase. The cognate antitoxin is VapB9. In Mycobacterium tuberculosis (strain CDC 1551 / Oshkosh), this protein is Ribonuclease VapC9.